Reading from the N-terminus, the 348-residue chain is MNNILSFDIDEIRDILRGWGEPSYRADQIFDWVYKKLILNPSSMTNLPKGLRQKIAEYFSFDIPKVVKITGEGNTKKYLLELEDGENIETVLISHKNRNTVCVSVQVGCAIGCKFCATGLVGLRRNLNTHEIVGQIILIQKELFEKGDRISNVVYMGMGEPLLNYDNVVKSIRIINREWGLNIGSKHITLSTIGIVPKIYQLGEEDLKVRLAISLHAPNNELRSKIIPINKEYPIEKLLESAFYYAEKTGRRVTFEYVLIKNFNDREEHAIELAGLLKNKPVHVNLIPWNKVPEYPWETSDLKDIFKFKKILSDAGINVTLRISYGSRIKAGCGQLRALYLKSKGELK.

Catalysis depends on E89, which acts as the Proton acceptor. The Radical SAM core domain maps to 95–328 (HKNRNTVCVS…VTLRISYGSR (234 aa)). C102 and C333 are oxidised to a cystine. C109, C113, and C116 together coordinate [4Fe-4S] cluster. Residues 159–160 (GE), S191, 214–216 (SLH), and N290 contribute to the S-adenosyl-L-methionine site. Catalysis depends on C333, which acts as the S-methylcysteine intermediate.

Belongs to the radical SAM superfamily. RlmN family. [4Fe-4S] cluster is required as a cofactor.

It is found in the cytoplasm. It catalyses the reaction adenosine(2503) in 23S rRNA + 2 reduced [2Fe-2S]-[ferredoxin] + 2 S-adenosyl-L-methionine = 2-methyladenosine(2503) in 23S rRNA + 5'-deoxyadenosine + L-methionine + 2 oxidized [2Fe-2S]-[ferredoxin] + S-adenosyl-L-homocysteine. It carries out the reaction adenosine(37) in tRNA + 2 reduced [2Fe-2S]-[ferredoxin] + 2 S-adenosyl-L-methionine = 2-methyladenosine(37) in tRNA + 5'-deoxyadenosine + L-methionine + 2 oxidized [2Fe-2S]-[ferredoxin] + S-adenosyl-L-homocysteine. In terms of biological role, specifically methylates position 2 of adenine 2503 in 23S rRNA and position 2 of adenine 37 in tRNAs. The protein is Probable dual-specificity RNA methyltransferase RlmN of Dictyoglomus thermophilum (strain ATCC 35947 / DSM 3960 / H-6-12).